The sequence spans 139 residues: Probable disulfide formation protein C 1 (139 aa).

A helical membrane pass occupies residues 8 to 27; it reads EYALFTAWGASFIATLGSLY. Cys37 and Cys40 form a disulfide bridge. Transmembrane regions (helical) follow at residues 42 to 61 and 68 to 85; these read YQRI…VVKK and YSLP…YHYV. Cys99 and Cys104 form a disulfide bridge. A helical membrane pass occupies residues 113-135; the sequence is GFVTIPFLALIGFITIAVCSFIV.

It belongs to the DsbB family. BdbC subfamily.

Its subcellular location is the cell membrane. Functionally, required for disulfide bond formation in some proteins. This is Probable disulfide formation protein C 1 (bdbC1) from Bacillus anthracis.